Consider the following 880-residue polypeptide: Leucine--tRNA ligase (880 aa).

The short motif at Pro-46 to His-56 is the 'HIGH' region element. Residues Ser-483 to Pro-502 are disordered. The 'KMSKS' region motif lies at Lys-638–Ser-642. Residue Lys-641 participates in ATP binding.

This sequence belongs to the class-I aminoacyl-tRNA synthetase family.

It is found in the cytoplasm. It catalyses the reaction tRNA(Leu) + L-leucine + ATP = L-leucyl-tRNA(Leu) + AMP + diphosphate. In Xanthomonas oryzae pv. oryzae (strain PXO99A), this protein is Leucine--tRNA ligase.